The chain runs to 89 residues: Small ribosomal subunit protein bS20 (89 aa).

It belongs to the bacterial ribosomal protein bS20 family.

Functionally, binds directly to 16S ribosomal RNA. In Stenotrophomonas maltophilia (strain K279a), this protein is Small ribosomal subunit protein bS20.